Consider the following 431-residue polypeptide: MANVVVVGAQWGDEGKGKVVDIYTEFADDVVRYQGGNNAGHTLVVGDEKIVLHLIPSGILHQGKRCIIGNGVVLDPEVFIREITNLKAKGKFQDDGVLLLSESLHIIMPYHKRIDIAREANSGAKKIGTTGRGIGPAYEDKIGRRGIRLMDLLDKQVFSRKLKEFLEEKNFILEKLLGERPFTFEEIFDEYSAYADTLRNYVADTTLVLHQDLKAGKKLLFEGAQGTLLDVDHGTYPYVTSSSTCAGGACTGTGASPRDINEIIGISKAYVTRVGSGPFPTELEDADGEKLRHTGGEFGATTGRPRRCGWFDALVIKYAVRVNGLTGIALTKLDVLSDFESIKICTGYSYNDKFLNELPANLDVFEKCRPVYEEMPGWQSDITGVRSFEELPEKAKNYVKRLEELAGCPIVLVSVGPRRDETIMLKNPFEA.

GTP contacts are provided by residues 12–18 and 40–42; these read GDEGKGK and GHT. D13 (proton acceptor) is an active-site residue. Positions 13 and 40 each coordinate Mg(2+). IMP-binding positions include 13–16, 38–41, T130, R144, Q225, T240, and R304; these read DEGK and NAGH. H41 functions as the Proton donor in the catalytic mechanism. Substrate is bound at residue 300–306; that stretch reads ATTGRPR. Residues R306, 332 to 334, and 414 to 416 each bind GTP; these read KLD and SVG.

This sequence belongs to the adenylosuccinate synthetase family. In terms of assembly, homodimer. The cofactor is Mg(2+).

It is found in the cytoplasm. It catalyses the reaction IMP + L-aspartate + GTP = N(6)-(1,2-dicarboxyethyl)-AMP + GDP + phosphate + 2 H(+). It participates in purine metabolism; AMP biosynthesis via de novo pathway; AMP from IMP: step 1/2. Functionally, plays an important role in the de novo pathway of purine nucleotide biosynthesis. Catalyzes the first committed step in the biosynthesis of AMP from IMP. This Geotalea uraniireducens (strain Rf4) (Geobacter uraniireducens) protein is Adenylosuccinate synthetase.